We begin with the raw amino-acid sequence, 444 residues long: Ras-related protein RabX (444 aa).

29 to 36 (GGDVCSKN) is a binding site for GTP. The short motif at 51–58 (LIQVFDDY) is the Effector region element. 73–77 (EFSSI) lines the GTP pocket. A disordered region spans residues 91–136 (ENNKNKNNNNNYNYNNNNYNNNNNNNNNNNNNNNNNNNNNNNNNNS). Positions 95–135 (NKNNNNNYNYNNNNYNNNNNNNNNNNNNNNNNNNNNNNNNN) are enriched in low complexity. 207–210 (NDSN) lines the GTP pocket. 2 disordered regions span residues 213–232 (TPNFSDSSSSSSSSSSSNII) and 298–401 (LQGD…NNDL). Low complexity-rich tracts occupy residues 217 to 232 (SDSSSSSSSSSSSNII) and 303 to 399 (NNNN…TYNN). The S-palmitoyl cysteine moiety is linked to residue Cys-439. The residue at position 441 (Cys-441) is a Cysteine methyl ester. Residue Cys-441 is the site of S-geranylgeranyl cysteine attachment. The propeptide at 442 to 444 (NLM) is removed in mature form.

Belongs to the small GTPase superfamily. Rab family.

It is found in the cell membrane. The sequence is that of Ras-related protein RabX (rabX) from Dictyostelium discoideum (Social amoeba).